Consider the following 228-residue polypeptide: uncharacterized protein (228 aa).

This sequence belongs to the HAD-like hydrolase superfamily.

It is found in the cytoplasm. The protein localises to the nucleus. This is an uncharacterized protein from Schizosaccharomyces pombe (strain 972 / ATCC 24843) (Fission yeast).